The sequence spans 209 residues: MANVHVINHPLVQHKLTIIRDKNTGTKAFRELVDEVATLMAYEITRDMELEDIQVETPLQTTTAKTLTGKKLGIVPILRAGLGMQDGILKLIPAAKVGHVGLYRDHDTLEPVEYFVKLPSDVEERLFIVVDPMLATGGSAIMAIDCLKKRGARNMKFMCLVAAPEGVKALQDAHPDVEIYVAGLDEKLDENGYIRPGLGDAGDRLFGTK.

5-phospho-alpha-D-ribose 1-diphosphate-binding positions include arginine 79, arginine 104, and 131-139 (DPMLATGGS). Uracil is bound by residues isoleucine 194 and 199-201 (GDA). Residue aspartate 200 coordinates 5-phospho-alpha-D-ribose 1-diphosphate.

This sequence belongs to the UPRTase family. The cofactor is Mg(2+).

The catalysed reaction is UMP + diphosphate = 5-phospho-alpha-D-ribose 1-diphosphate + uracil. It participates in pyrimidine metabolism; UMP biosynthesis via salvage pathway; UMP from uracil: step 1/1. With respect to regulation, allosterically activated by GTP. Its function is as follows. Catalyzes the conversion of uracil and 5-phospho-alpha-D-ribose 1-diphosphate (PRPP) to UMP and diphosphate. This Listeria monocytogenes serovar 1/2a (strain ATCC BAA-679 / EGD-e) protein is Uracil phosphoribosyltransferase.